We begin with the raw amino-acid sequence, 257 residues long: ATP synthase subunit a (257 aa).

Positions 1–4 are cleaved as a propeptide — removed in mature form; it reads MFIT. The next 8 helical transmembrane spans lie at 27–47, 58–78, 93–113, 122–142, 149–169, 189–209, 214–234, and 236–256; these read FSNF…LAII, IVPQ…LNLV, YFPF…LRLI, QLIF…ILGL, VFGL…LVLI, IIAG…FMGL, FIIG…EFGI, and FIQA…SLNL.

It belongs to the ATPase A chain family. In terms of assembly, F-type ATPases have 2 components, CF(1) - the catalytic core - and CF(0) - the membrane proton channel. CF(1) has five subunits: alpha(3), beta(3), gamma(1), delta(1), epsilon(1). CF(0) has three main subunits: a, b and c.

The protein localises to the mitochondrion inner membrane. In terms of biological role, mitochondrial membrane ATP synthase (F(1)F(0) ATP synthase or Complex V) produces ATP from ADP in the presence of a proton gradient across the membrane which is generated by electron transport complexes of the respiratory chain. F-type ATPases consist of two structural domains, F(1) - containing the extramembraneous catalytic core and F(0) - containing the membrane proton channel, linked together by a central stalk and a peripheral stalk. During catalysis, ATP synthesis in the catalytic domain of F(1) is coupled via a rotary mechanism of the central stalk subunits to proton translocation. Key component of the proton channel; it may play a direct role in the translocation of protons across the membrane. The chain is ATP synthase subunit a (atp6) from Schizosaccharomyces pombe (strain 972 / ATCC 24843) (Fission yeast).